A 205-amino-acid polypeptide reads, in one-letter code: Small ribosomal subunit protein uS4 (205 aa).

The segment covering 1-16 has biased composition (basic and acidic residues); that stretch reads MSKRESSKYKIDRRMG. Positions 1 to 46 are disordered; sequence MSKRESSKYKIDRRMGENIWGRPKSPVNRREYGPGQHGQRRKGKLS. One can recognise an S4 RNA-binding domain in the interval 94–157; the sequence is SRLDAIVYRA…KQLVIVLEAV (64 aa).

The protein belongs to the universal ribosomal protein uS4 family. Part of the 30S ribosomal subunit. Contacts protein S5. The interaction surface between S4 and S5 is involved in control of translational fidelity.

Functionally, one of the primary rRNA binding proteins, it binds directly to 16S rRNA where it nucleates assembly of the body of the 30S subunit. Its function is as follows. With S5 and S12 plays an important role in translational accuracy. In Rhizobium johnstonii (strain DSM 114642 / LMG 32736 / 3841) (Rhizobium leguminosarum bv. viciae), this protein is Small ribosomal subunit protein uS4.